Reading from the N-terminus, the 349-residue chain is Holliday junction branch migration complex subunit RuvB (349 aa).

The large ATPase domain (RuvB-L) stretch occupies residues 1–186 (MSEDYLDRDV…FGFTAHMDFY (186 aa)). ATP contacts are provided by residues leucine 25, arginine 26, glycine 67, lysine 70, threonine 71, serine 72, 133–135 (EDF), arginine 176, tyrosine 186, and arginine 223. Threonine 71 provides a ligand contact to Mg(2+). A small ATPAse domain (RuvB-S) region spans residues 187–257 (EPTELEGVLA…VAKAALAVYD (71 aa)). A head domain (RuvB-H) region spans residues 260–349 (ELGLDRLDRA…GLSQPGLFES (90 aa)). Residues arginine 315 and arginine 320 each contribute to the DNA site.

Belongs to the RuvB family. Homohexamer. Forms an RuvA(8)-RuvB(12)-Holliday junction (HJ) complex. HJ DNA is sandwiched between 2 RuvA tetramers; dsDNA enters through RuvA and exits via RuvB. An RuvB hexamer assembles on each DNA strand where it exits the tetramer. Each RuvB hexamer is contacted by two RuvA subunits (via domain III) on 2 adjacent RuvB subunits; this complex drives branch migration. In the full resolvosome a probable DNA-RuvA(4)-RuvB(12)-RuvC(2) complex forms which resolves the HJ.

The protein resides in the cytoplasm. The catalysed reaction is ATP + H2O = ADP + phosphate + H(+). Functionally, the RuvA-RuvB-RuvC complex processes Holliday junction (HJ) DNA during genetic recombination and DNA repair, while the RuvA-RuvB complex plays an important role in the rescue of blocked DNA replication forks via replication fork reversal (RFR). RuvA specifically binds to HJ cruciform DNA, conferring on it an open structure. The RuvB hexamer acts as an ATP-dependent pump, pulling dsDNA into and through the RuvAB complex. RuvB forms 2 homohexamers on either side of HJ DNA bound by 1 or 2 RuvA tetramers; 4 subunits per hexamer contact DNA at a time. Coordinated motions by a converter formed by DNA-disengaged RuvB subunits stimulates ATP hydrolysis and nucleotide exchange. Immobilization of the converter enables RuvB to convert the ATP-contained energy into a lever motion, pulling 2 nucleotides of DNA out of the RuvA tetramer per ATP hydrolyzed, thus driving DNA branch migration. The RuvB motors rotate together with the DNA substrate, which together with the progressing nucleotide cycle form the mechanistic basis for DNA recombination by continuous HJ branch migration. Branch migration allows RuvC to scan DNA until it finds its consensus sequence, where it cleaves and resolves cruciform DNA. The polypeptide is Holliday junction branch migration complex subunit RuvB (Mycobacterium leprae (strain Br4923)).